The following is a 100-amino-acid chain: MICOS complex subunit MIC12 (100 aa).

A helical membrane pass occupies residues 10 to 26 (FATISSVAAASLYLYAI).

The protein belongs to the MICOS complex subunit Mic12 family. Component of the mitochondrial contact site and cristae organizing system (MICOS) complex.

It localises to the mitochondrion inner membrane. Component of the MICOS complex, a large protein complex of the mitochondrial inner membrane that plays crucial roles in the maintenance of crista junctions, inner membrane architecture, and formation of contact sites to the outer membrane. The chain is MICOS complex subunit MIC12 (AIM5) from Vanderwaltozyma polyspora (strain ATCC 22028 / DSM 70294 / BCRC 21397 / CBS 2163 / NBRC 10782 / NRRL Y-8283 / UCD 57-17) (Kluyveromyces polysporus).